Here is a 366-residue protein sequence, read N- to C-terminus: Ribosomal RNA large subunit methyltransferase M (366 aa).

S-adenosyl-L-methionine contacts are provided by residues Ser188, 221–224 (CPGG), Asp240, Asp260, and Asp277. The active-site Proton acceptor is the Lys306.

Belongs to the class I-like SAM-binding methyltransferase superfamily. RNA methyltransferase RlmE family. RlmM subfamily. As to quaternary structure, monomer.

It localises to the cytoplasm. It catalyses the reaction cytidine(2498) in 23S rRNA + S-adenosyl-L-methionine = 2'-O-methylcytidine(2498) in 23S rRNA + S-adenosyl-L-homocysteine + H(+). Functionally, catalyzes the 2'-O-methylation at nucleotide C2498 in 23S rRNA. This Shigella dysenteriae serotype 1 (strain Sd197) protein is Ribosomal RNA large subunit methyltransferase M.